Consider the following 360-residue polypeptide: UDP-N-acetylglucosamine--N-acetylmuramyl-(pentapeptide) pyrophosphoryl-undecaprenol N-acetylglucosamine transferase (360 aa).

UDP-N-acetyl-alpha-D-glucosamine contacts are provided by residues 12–14 (TGG), Asn-124, Arg-161, Ser-189, Ile-243, and Gln-288.

The protein belongs to the glycosyltransferase 28 family. MurG subfamily.

It localises to the cell inner membrane. It carries out the reaction di-trans,octa-cis-undecaprenyl diphospho-N-acetyl-alpha-D-muramoyl-L-alanyl-D-glutamyl-meso-2,6-diaminopimeloyl-D-alanyl-D-alanine + UDP-N-acetyl-alpha-D-glucosamine = di-trans,octa-cis-undecaprenyl diphospho-[N-acetyl-alpha-D-glucosaminyl-(1-&gt;4)]-N-acetyl-alpha-D-muramoyl-L-alanyl-D-glutamyl-meso-2,6-diaminopimeloyl-D-alanyl-D-alanine + UDP + H(+). It functions in the pathway cell wall biogenesis; peptidoglycan biosynthesis. Its function is as follows. Cell wall formation. Catalyzes the transfer of a GlcNAc subunit on undecaprenyl-pyrophosphoryl-MurNAc-pentapeptide (lipid intermediate I) to form undecaprenyl-pyrophosphoryl-MurNAc-(pentapeptide)GlcNAc (lipid intermediate II). This Acidithiobacillus ferrooxidans (strain ATCC 23270 / DSM 14882 / CIP 104768 / NCIMB 8455) (Ferrobacillus ferrooxidans (strain ATCC 23270)) protein is UDP-N-acetylglucosamine--N-acetylmuramyl-(pentapeptide) pyrophosphoryl-undecaprenol N-acetylglucosamine transferase.